The following is a 325-amino-acid chain: Peroxidase RIP1 (325 aa).

A signal peptide spans methionine 1–serine 21. Intrachain disulfides connect cysteine 38-cysteine 118, cysteine 71-cysteine 76, cysteine 125-cysteine 321, and cysteine 206-cysteine 231. The active-site Proton acceptor is histidine 69. Positions 70, 73, 75, 77, and 79 each coordinate Ca(2+). N-linked (GlcNAc...) asparagine glycosylation is present at asparagine 87. Proline 169 contributes to the substrate binding site. An N-linked (GlcNAc...) asparagine glycan is attached at asparagine 174. Residue histidine 199 coordinates heme b. Residue threonine 200 coordinates Ca(2+). N-linked (GlcNAc...) asparagine glycosylation is present at asparagine 215. Ca(2+) contacts are provided by aspartate 244, threonine 246, and glutamate 251.

This sequence belongs to the peroxidase family. Classical plant (class III) peroxidase subfamily. Heme b serves as cofactor. It depends on Ca(2+) as a cofactor. In terms of tissue distribution, expressed in the differentiating root epidermis following inoculation with the bacterial symbiont Sinorhizobium meliloti.

Its subcellular location is the secreted. The catalysed reaction is 2 a phenolic donor + H2O2 = 2 a phenolic radical donor + 2 H2O. In terms of biological role, removal of H(2)O(2), oxidation of toxic reductants, biosynthesis and degradation of lignin, suberization, auxin catabolism, response to environmental stresses such as wounding, pathogen attack and oxidative stress. These functions might be dependent on each isozyme/isoform in each plant tissue. The protein is Peroxidase RIP1 of Medicago truncatula (Barrel medic).